Here is a 172-residue protein sequence, read N- to C-terminus: Adenine phosphoribosyltransferase (172 aa).

This sequence belongs to the purine/pyrimidine phosphoribosyltransferase family. As to quaternary structure, homodimer.

The protein resides in the cytoplasm. It catalyses the reaction AMP + diphosphate = 5-phospho-alpha-D-ribose 1-diphosphate + adenine. Its pathway is purine metabolism; AMP biosynthesis via salvage pathway; AMP from adenine: step 1/1. Its function is as follows. Catalyzes a salvage reaction resulting in the formation of AMP, that is energically less costly than de novo synthesis. This is Adenine phosphoribosyltransferase from Parasynechococcus marenigrum (strain WH8102).